A 162-amino-acid polypeptide reads, in one-letter code: NADH-ubiquinone oxidoreductase chain 6 (162 aa).

The next 5 membrane-spanning stretches (helical) occupy residues 1–21 (MFFE…VGYT), 32–52 (VMLF…FLAL), 55–75 (LLVY…LLEI), 87–107 (WSTL…TPSM), and 129–149 (LYLY…VALF).

The protein belongs to the complex I subunit 6 family.

Its subcellular location is the mitochondrion membrane. The enzyme catalyses a ubiquinone + NADH + 5 H(+)(in) = a ubiquinol + NAD(+) + 4 H(+)(out). Functionally, core subunit of the mitochondrial membrane respiratory chain NADH dehydrogenase (Complex I) that is believed to belong to the minimal assembly required for catalysis. Complex I functions in the transfer of electrons from NADH to the respiratory chain. The immediate electron acceptor for the enzyme is believed to be ubiquinone. In Chlamydomonas reinhardtii (Chlamydomonas smithii), this protein is NADH-ubiquinone oxidoreductase chain 6 (ND6).